Reading from the N-terminus, the 1396-residue chain is DNA-directed RNA polymerase subunit beta' (1396 aa).

Cys-72, Cys-74, Cys-87, and Cys-90 together coordinate Zn(2+). Mg(2+) is bound by residues Asp-463, Asp-465, and Asp-467. 4 residues coordinate Zn(2+): Cys-814, Cys-889, Cys-896, and Cys-899.

This sequence belongs to the RNA polymerase beta' chain family. In terms of assembly, the RNAP catalytic core consists of 2 alpha, 1 beta, 1 beta' and 1 omega subunit. When a sigma factor is associated with the core the holoenzyme is formed, which can initiate transcription. The cofactor is Mg(2+). Zn(2+) serves as cofactor.

It carries out the reaction RNA(n) + a ribonucleoside 5'-triphosphate = RNA(n+1) + diphosphate. Its function is as follows. DNA-dependent RNA polymerase catalyzes the transcription of DNA into RNA using the four ribonucleoside triphosphates as substrates. The sequence is that of DNA-directed RNA polymerase subunit beta' from Chlamydia trachomatis serovar L2 (strain ATCC VR-902B / DSM 19102 / 434/Bu).